A 368-amino-acid polypeptide reads, in one-letter code: Mitogen-activated protein kinase 7 (368 aa).

One can recognise a Protein kinase domain in the interval 32–319 (YVPIKPIGRG…VTDALLHPYM (288 aa)). Residues 38–46 (IGRGAYGVV) and Lys61 each bind ATP. The Proton acceptor role is filled by Asp158. Thr191 is subject to Phosphothreonine. The TXY signature appears at 191–193 (TEY). The residue at position 193 (Tyr193) is a Phosphotyrosine. Thr196 carries the post-translational modification Phosphothreonine.

This sequence belongs to the protein kinase superfamily. CMGC Ser/Thr protein kinase family. MAP kinase subfamily. Interacts with MKK3. The cofactor is Mg(2+). In terms of processing, dually phosphorylated on Thr-191 and Tyr-193, which activates the enzyme.

The enzyme catalyses L-seryl-[protein] + ATP = O-phospho-L-seryl-[protein] + ADP + H(+). It carries out the reaction L-threonyl-[protein] + ATP = O-phospho-L-threonyl-[protein] + ADP + H(+). With respect to regulation, activated by threonine and tyrosine phosphorylation. Activated in response to hydrogen peroxide. Activation is triggered by MAPKKK17 and MAPKKK18 in a MKK3-dependent manner. MKK3-MPK7 module acts as a positive regulator of PR1 gene expression. In Arabidopsis thaliana (Mouse-ear cress), this protein is Mitogen-activated protein kinase 7 (MPK7).